A 339-amino-acid polypeptide reads, in one-letter code: Heat-inducible transcription repressor HrcA (339 aa).

The protein belongs to the HrcA family.

Its function is as follows. Negative regulator of class I heat shock genes (grpE-dnaK-dnaJ and groELS operons). Prevents heat-shock induction of these operons. The sequence is that of Heat-inducible transcription repressor HrcA from Acidothermus cellulolyticus (strain ATCC 43068 / DSM 8971 / 11B).